We begin with the raw amino-acid sequence, 342 residues long: Tetraacyldisaccharide 4'-kinase (342 aa).

68 to 75 (TVGGTGKT) contributes to the ATP binding site.

It belongs to the LpxK family.

The catalysed reaction is a lipid A disaccharide + ATP = a lipid IVA + ADP + H(+). It functions in the pathway glycolipid biosynthesis; lipid IV(A) biosynthesis; lipid IV(A) from (3R)-3-hydroxytetradecanoyl-[acyl-carrier-protein] and UDP-N-acetyl-alpha-D-glucosamine: step 6/6. Functionally, transfers the gamma-phosphate of ATP to the 4'-position of a tetraacyldisaccharide 1-phosphate intermediate (termed DS-1-P) to form tetraacyldisaccharide 1,4'-bis-phosphate (lipid IVA). In Burkholderia ambifaria (strain ATCC BAA-244 / DSM 16087 / CCUG 44356 / LMG 19182 / AMMD) (Burkholderia cepacia (strain AMMD)), this protein is Tetraacyldisaccharide 4'-kinase.